Reading from the N-terminus, the 457-residue chain is Nuclear hormone receptor family member odr-7 (457 aa).

Disordered regions lie at residues 57–95 and 230–252; these read EQPNNNVPQQPWGPFPPAFGGRPSGEQTDGNPGEFDNDA and KQESSDDSTLKNLKKSDQQLQQP. A DNA-binding region (nuclear receptor) is located at residues 327-407; it reads LHDCQVCLST…IGMLPENVQH (81 aa). NR C4-type zinc fingers lie at residues 330 to 351 and 367 to 395; these read CQVCLSTHANGLHFGARTCAAC and CKRNQRCNNASRDGTGYRKICRSCRMKRC. The tract at residues 435-457 is disordered; it reads QPSGSAAQPITVSSSESPRHTTN.

It belongs to the nuclear hormone receptor family. NR0 subfamily. In terms of assembly, heterodimer with a partner that confers DNA binding capacity or a nuclear hormone receptor whose DNA binding it inhibits. As to expression, expressed predominantly in the AWA neurons.

The protein resides in the nucleus. The protein localises to the cytoplasm. It localises to the perinuclear region. Functionally, required for the function of one pair of chemosensory neurons called AWA neurons that are involved in chemotaxis to volatile odorants. Acts in a pathway that specifies olfactory neuronal fate. Regulates the transcription of olfactory signaling molecules such as odr-10 that specify AWA neuron identity and function. Represses the expression in AWA neurons of factors such as str-2 which specify AWC neuron identity. The sequence is that of Nuclear hormone receptor family member odr-7 (odr-7) from Caenorhabditis elegans.